The sequence spans 177 residues: Large ribosomal subunit protein uL6 (177 aa).

This sequence belongs to the universal ribosomal protein uL6 family. In terms of assembly, part of the 50S ribosomal subunit.

In terms of biological role, this protein binds to the 23S rRNA, and is important in its secondary structure. It is located near the subunit interface in the base of the L7/L12 stalk, and near the tRNA binding site of the peptidyltransferase center. This is Large ribosomal subunit protein uL6 from Rickettsia massiliae (strain Mtu5).